Reading from the N-terminus, the 330-residue chain is Protein FAM170A (330 aa).

3 disordered regions span residues 1–54, 76–104, and 169–218; these read MKRR…VTST, HRDSPQPQSPLAQVQERGETPPRSQHVSL, and VGTP…AKTP. A compositionally biased stretch (polar residues) spans 174-185; sequence SDVSTRNLLSDS. Positions 189–200 are enriched in basic and acidic residues; that stretch reads GEEKEHEERTES. Position 217 is a phosphothreonine (Thr-217). A C2H2-type; degenerate zinc finger spans residues 228–252; sequence FRCMACCRVFTTMEALQEHVQFGIR. A disordered region spans residues 270 to 330; sequence NMESESTQDE…VFHSPKDRNS (61 aa). Residues 275 to 293 are compositionally biased toward acidic residues; that stretch reads STQDEQEEENGNEKEEEEK. Ser-315 carries the post-translational modification Phosphoserine.

This sequence belongs to the FAM170 family. As to expression, expressed strongly in testis and brain and weakly in prostate, spleen, pancreas and uterus.

It localises to the nucleus. Functionally, acts as a nuclear transcription factor that positively regulates the expression of heat shock genes. Binds to heat shock promoter elements (HSE). This chain is Protein FAM170A (FAM170A), found in Homo sapiens (Human).